The following is a 307-amino-acid chain: Furaquinocin biosynthesis prenyltransferase (307 aa).

This sequence belongs to the aromatic prenyltransferase family. As to quaternary structure, monomer.

It catalyses the reaction 2-O,3-dimethylflaviolin + (2E)-geranyl diphosphate = 6-linalyl-2-O,3-dimethylflaviolin + diphosphate. The enzyme catalyses 2-O,3-dimethylflaviolin + (2E)-geranyl diphosphate + H(+) = 7-O-geranyl-2-O,3-dimethylflaviolin + diphosphate. Does not require any metal cations for activity. In terms of biological role, involved in the biosynthesis of furaquinocin. Catalyzes the transfer of a geranyl group to 2-methoxy-3-methyl-flaviolin to yield 6-prenyl-2-methoxy-3-methyl-flaviolin and 7-O-geranyl-2-methoxy-3-methyl-flaviolin in a 10:1 ratio. Can also use other substrates such as flaviolin or 1,3-dihydroxy naphthalene, and can also use DMAPP as prenyl donor. This is Furaquinocin biosynthesis prenyltransferase from Streptomyces sp. (strain KO-3988).